The following is a 244-amino-acid chain: 3-deoxy-manno-octulosonate cytidylyltransferase (244 aa).

The protein belongs to the KdsB family.

It localises to the cytoplasm. The catalysed reaction is 3-deoxy-alpha-D-manno-oct-2-ulosonate + CTP = CMP-3-deoxy-beta-D-manno-octulosonate + diphosphate. It participates in nucleotide-sugar biosynthesis; CMP-3-deoxy-D-manno-octulosonate biosynthesis; CMP-3-deoxy-D-manno-octulosonate from 3-deoxy-D-manno-octulosonate and CTP: step 1/1. It functions in the pathway bacterial outer membrane biogenesis; lipopolysaccharide biosynthesis. Functionally, activates KDO (a required 8-carbon sugar) for incorporation into bacterial lipopolysaccharide in Gram-negative bacteria. In Ruthia magnifica subsp. Calyptogena magnifica, this protein is 3-deoxy-manno-octulosonate cytidylyltransferase.